The sequence spans 257 residues: AN1-type zinc finger protein 2B (257 aa).

2 AN1-type zinc fingers span residues 4 to 52 and 94 to 142; these read PDLG…QKDI and KIFT…HQTS. Zn(2+)-binding residues include C10, C15, C25, C28, C33, H36, H42, C44, C100, C105, C115, C118, C123, H126, H132, and C134. The interval 141 to 151 is VCP/p97-interacting motif (VIM); the sequence is TSRAGLAAISR. Residues 152–184 form a disordered region; the sequence is AQGLASTSTAPSPSRTLPSSSSPSRATPQLPTR. A compositionally biased stretch (low complexity) spans 155-179; sequence LASTSTAPSPSRTLPSSSSPSRATP. 3 positions are modified to phosphoserine; by MAPK14: S163, S173, and S187. UIM domains lie at 197–216 and 221–240; these read SEDE…AKPQ and QEED…AEYQ. C254 carries the post-translational modification Cysteine methyl ester. The S-geranylgeranyl cysteine moiety is linked to residue C254. The short motif at 254-257 is the CAAX motif element; it reads CSLC. Residues 255 to 257 constitute a propeptide, removed in mature form; it reads SLC.

As to quaternary structure, binds 'Lys-48'-linked polyubiquitin chains of ubiquitinated proteins. Associates with the proteasome complex; upon exposure to arsenite. Interacts (via VIM motif) with VCP; the interaction is direct. Interacts with BAG6. Interacts with IGF1R (nascent precursor form). Interacts with DERL1, FAF2, NPLOC4 and UFD1; probably through VCP. Phosphorylated by MAPK14. Phosphorylation has no effect on association with the proteasome complex.

Its subcellular location is the endoplasmic reticulum membrane. Plays a role in protein homeostasis by regulating both the translocation and the ubiquitin-mediated proteasomal degradation of nascent proteins at the endoplasmic reticulum. It is involved in the regulation of signal-mediated translocation of proteins into the endoplasmic reticulum. It also plays a role in the ubiquitin-mediated proteasomal degradation of proteins for which signal-mediated translocation to the endoplasmic reticulum has failed. May therefore function in the endoplasmic reticulum stress-induced pre-emptive quality control, a mechanism that selectively attenuates the translocation of newly synthesized proteins into the endoplasmic reticulum and reroutes them to the cytosol for proteasomal degradation. By controlling the steady-state expression of the IGF1R receptor, indirectly regulates the insulin-like growth factor receptor signaling pathway. The chain is AN1-type zinc finger protein 2B from Mus musculus (Mouse).